The primary structure comprises 161 residues: Large ribosomal subunit protein uL15 (161 aa).

The disordered stretch occupies residues 1-41 (MTKLNELAPAPGSTKGRMRVGRGPGSGKGKTAGRGVKGQKA). Residues 22–36 (RGPGSGKGKTAGRGV) are compositionally biased toward gly residues.

The protein belongs to the universal ribosomal protein uL15 family. Part of the 50S ribosomal subunit.

Binds to the 23S rRNA. In Caulobacter sp. (strain K31), this protein is Large ribosomal subunit protein uL15.